We begin with the raw amino-acid sequence, 72 residues long: Translation initiation factor IF-1 (72 aa).

Residues 1–72 (MSKQDVIEFD…TKGRITYRGK (72 aa)) enclose the S1-like domain.

This sequence belongs to the IF-1 family. As to quaternary structure, component of the 30S ribosomal translation pre-initiation complex which assembles on the 30S ribosome in the order IF-2 and IF-3, IF-1 and N-formylmethionyl-tRNA(fMet); mRNA recruitment can occur at any time during PIC assembly.

The protein localises to the cytoplasm. In terms of biological role, one of the essential components for the initiation of protein synthesis. Stabilizes the binding of IF-2 and IF-3 on the 30S subunit to which N-formylmethionyl-tRNA(fMet) subsequently binds. Helps modulate mRNA selection, yielding the 30S pre-initiation complex (PIC). Upon addition of the 50S ribosomal subunit IF-1, IF-2 and IF-3 are released leaving the mature 70S translation initiation complex. The protein is Translation initiation factor IF-1 of Hydrogenovibrio crunogenus (strain DSM 25203 / XCL-2) (Thiomicrospira crunogena).